The sequence spans 136 residues: Ribonuclease P protein component (136 aa).

Belongs to the RnpA family. As to quaternary structure, consists of a catalytic RNA component (M1 or rnpB) and a protein subunit.

It catalyses the reaction Endonucleolytic cleavage of RNA, removing 5'-extranucleotides from tRNA precursor.. Functionally, RNaseP catalyzes the removal of the 5'-leader sequence from pre-tRNA to produce the mature 5'-terminus. It can also cleave other RNA substrates such as 4.5S RNA. The protein component plays an auxiliary but essential role in vivo by binding to the 5'-leader sequence and broadening the substrate specificity of the ribozyme. The sequence is that of Ribonuclease P protein component from Arthrobacter sp. (strain FB24).